Consider the following 460-residue polypeptide: A-type ATP synthase subunit B (460 aa).

It belongs to the ATPase alpha/beta chains family. As to quaternary structure, has multiple subunits with at least A(3), B(3), C, D, E, F, H, I and proteolipid K(x).

Its subcellular location is the cell membrane. Functionally, component of the A-type ATP synthase that produces ATP from ADP in the presence of a proton gradient across the membrane. The B chain is a regulatory subunit. The polypeptide is A-type ATP synthase subunit B (Thermoplasma volcanium (strain ATCC 51530 / DSM 4299 / JCM 9571 / NBRC 15438 / GSS1)).